A 225-amino-acid polypeptide reads, in one-letter code: uncharacterized protein (225 aa).

Helical transmembrane passes span 1–21 (MFIGIVSLFLTVLVYLGAKKV), 31–51 (SPLLVTPAVLVGLLLLVNVPY), 56–76 (LGGGLLTDMLQPATVAFAIPL), 88–108 (VEIILNVAVGSCIAIISTALI), 145–165 (VTAVFVILTALLGTVIGPMVI), and 205–225 (VSMILAAIMTLCAAPFLLSFM).

It belongs to the YohK (E.coli)/YwbG (IPA-22R) (B.subtilis) family.

It is found in the cell membrane. This is an uncharacterized protein from Bacillus subtilis (strain 168).